The sequence spans 198 residues: MLYPTPIAKLIDSFSKLPGIGTKTATRLAFYTIGMSDEDVNEFAKNLLAAKRELTYCSVCGNLTDDDPCLICTDKTRDQSVILVVEDSKDVSAMEKIQEYNGLYHVLHGLISPMNGISPDDINLKSLITRLMDGQVTEVIVATNATADGEATSMYISRVLKPAGIKVTRLARGLAVGSDIEYADEVTLLRAIENRTEL.

The C4-type zinc finger occupies 57 to 72 (CSVCGNLTDDDPCLIC). One can recognise a Toprim domain in the interval 80 to 175 (SVILVVEDSK…KVTRLARGLA (96 aa)).

This sequence belongs to the RecR family.

Its function is as follows. May play a role in DNA repair. It seems to be involved in an RecBC-independent recombinational process of DNA repair. It may act with RecF and RecO. This is Recombination protein RecR from Streptococcus agalactiae serotype Ia (strain ATCC 27591 / A909 / CDC SS700).